A 151-amino-acid chain; its full sequence is UPF0178 protein GSU0171 (151 aa).

Belongs to the UPF0178 family.

The sequence is that of UPF0178 protein GSU0171 from Geobacter sulfurreducens (strain ATCC 51573 / DSM 12127 / PCA).